A 420-amino-acid polypeptide reads, in one-letter code: Glycogen synthase kinase-3 beta (420 aa).

Positions 1–22 (MSGRPRTTSFAESCKPVQQPSA) are enriched in polar residues. The disordered stretch occupies residues 1 to 53 (MSGRPRTTSFAESCKPVQQPSAFGSMKVSRDKDGSKVTTVVATPGQGPDRPQE). The residue at position 9 (serine 9) is a Phosphoserine; by PKB/AKT1, RPS6KA3 and SGK3. Residue cysteine 14 is the site of S-palmitoyl cysteine attachment. In terms of domain architecture, Protein kinase spans 56 to 340 (YTDTKVIGNG…PLEACAHSFF (285 aa)). ATP is bound by residues 62–70 (IGNGSFGVV) and lysine 85. Aspartate 181 functions as the Proton acceptor in the catalytic mechanism. Residue tyrosine 216 is modified to Phosphotyrosine. Positions 386–401 (AAASTPTNATAASDAN) are enriched in low complexity. The tract at residues 386 to 420 (AAASTPTNATAASDANTGDRGQTNNAASASASNST) is disordered. Serine 389 carries the post-translational modification Phosphoserine. Phosphothreonine occurs at positions 390 and 402. Residues 409-420 (NNAASASASNST) are compositionally biased toward low complexity.

This sequence belongs to the protein kinase superfamily. CMGC Ser/Thr protein kinase family. GSK-3 subfamily. Monomer. Interacts with ARRB2, DISC1 and ZBED3. Interacts with CABYR, MMP2, MUC1, NIN and PRUNE1. Interacts with AXIN1; the interaction mediates hyperphosphorylation of CTNNB1 leading to its ubiquitination and destruction. Interacts with and phosphorylates SNAI1. Interacts with DNM1L (via a C-terminal domain). Found in a complex composed of MACF1, APC, AXIN1, CTNNB1 and GSK3B. Interacts with SGK3. Interacts with DAB2IP (via C2 domain); the interaction stimulates GSK3B kinase activation. Interacts (via C2 domain) with PPP2CA. Interacts with the CLOCK-BMAL1 heterodimer. Interacts with the BMAL1. Interacts with CTNND2. Interacts with NCYM. The complex composed, at least, of APC, CTNNB1 and GSK3B interacts with JPT1; the interaction requires the inactive form of GSK3B (phosphorylated at 'Ser-9'). Forms a complex composed of PRKAR2A or PRKAR2B, GSK3B and GSKIP through GSKIP interaction; facilitates PKA-induced phosphorylation and regulates GSK3B activity. Interacts with GSKIP. Interacts with GID8. Interacts with PIWIL2. Interacts with LMBR1L. Interacts with DDX3X. Interacts with BIRC2. Interacts with TNFRSF10B; TNFRSF10B stimulation inhibits GSK3B kinase activity. Interacts with RICTOR; the interaction results in phosphorylation of RICTOR at 'Thr-1695' by GSK3B which facilitates FBXW7-mediated ubiquitination and subsequent degradation of RICTOR. Found in a complex with SLC39A6, SLC39A10 and with GSK3B that controls NCAM1 phosphorylation. Interacts with PKP3 (via ARM repeats); the interaction may be involved in PKP3 protein degradation. In terms of processing, phosphorylated by AKT1 and ILK1. Upon insulin-mediated signaling, the activated PKB/AKT1 protein kinase phosphorylates and deactivates GSK3B, resulting in the dephosphorylation and activation of GYS1. Activated by phosphorylation at Tyr-216. Inactivated by phosphorylation at Ser-9. Phosphorylated in a circadian manner in the hippocampus. Post-translationally, mono-ADP-ribosylation by PARP10 negatively regulates kinase activity. Palmitoylated. Palmitoylation by ZDHHC4 prevents AKT1-mediated phosphorylation. As to expression, expressed in testis, thymus, prostate and ovary and weakly expressed in lung, brain and kidney. Colocalizes with EIF2AK2/PKR and TAU in the Alzheimer disease (AD) brain.

The protein localises to the cytoplasm. The protein resides in the nucleus. It is found in the cell membrane. It catalyses the reaction L-seryl-[tau protein] + ATP = O-phospho-L-seryl-[tau protein] + ADP + H(+). The catalysed reaction is L-threonyl-[tau protein] + ATP = O-phospho-L-threonyl-[tau protein] + ADP + H(+). It carries out the reaction L-seryl-[protein] + ATP = O-phospho-L-seryl-[protein] + ADP + H(+). The enzyme catalyses L-threonyl-[protein] + ATP = O-phospho-L-threonyl-[protein] + ADP + H(+). With respect to regulation, activated by phosphorylation at Tyr-216. In response to insulin, inhibited by phosphorylation at Ser-9 by PKB/AKT1 and RPS6KA3; phosphorylation at this site causes a conformational change, preventing access of substrates to the active site. Inhibited by IL22 treatment which also triggers phosphorylation at Ser-9, promoting inactivation. Inhibited by lithium. Functionally, constitutively active protein kinase that acts as a negative regulator in the hormonal control of glucose homeostasis, Wnt signaling and regulation of transcription factors and microtubules, by phosphorylating and inactivating glycogen synthase (GYS1 or GYS2), EIF2B, CTNNB1/beta-catenin, APC, AXIN1, DPYSL2/CRMP2, JUN, NFATC1/NFATC, MAPT/TAU and MACF1. Requires primed phosphorylation of the majority of its substrates. In skeletal muscle, contributes to insulin regulation of glycogen synthesis by phosphorylating and inhibiting GYS1 activity and hence glycogen synthesis. May also mediate the development of insulin resistance by regulating activation of transcription factors. Regulates protein synthesis by controlling the activity of initiation factor 2B (EIF2BE/EIF2B5) in the same manner as glycogen synthase. In Wnt signaling, GSK3B forms a multimeric complex with APC, AXIN1 and CTNNB1/beta-catenin and phosphorylates the N-terminus of CTNNB1 leading to its degradation mediated by ubiquitin/proteasomes. Phosphorylates JUN at sites proximal to its DNA-binding domain, thereby reducing its affinity for DNA. Phosphorylates NFATC1/NFATC on conserved serine residues promoting NFATC1/NFATC nuclear export, shutting off NFATC1/NFATC gene regulation, and thereby opposing the action of calcineurin. Phosphorylates MAPT/TAU on 'Thr-548', decreasing significantly MAPT/TAU ability to bind and stabilize microtubules. MAPT/TAU is the principal component of neurofibrillary tangles in Alzheimer disease. Plays an important role in ERBB2-dependent stabilization of microtubules at the cell cortex. Phosphorylates MACF1, inhibiting its binding to microtubules which is critical for its role in bulge stem cell migration and skin wound repair. Probably regulates NF-kappa-B (NFKB1) at the transcriptional level and is required for the NF-kappa-B-mediated anti-apoptotic response to TNF-alpha (TNF/TNFA). Negatively regulates replication in pancreatic beta-cells, resulting in apoptosis, loss of beta-cells and diabetes. Through phosphorylation of the anti-apoptotic protein MCL1, may control cell apoptosis in response to growth factors deprivation. Phosphorylates MUC1 in breast cancer cells, decreasing the interaction of MUC1 with CTNNB1/beta-catenin. Is necessary for the establishment of neuronal polarity and axon outgrowth. Phosphorylates MARK2, leading to inhibition of its activity. Phosphorylates SIK1 at 'Thr-182', leading to sustainment of its activity. Phosphorylates ZC3HAV1 which enhances its antiviral activity. Phosphorylates SNAI1, leading to its ubiquitination and proteasomal degradation. Phosphorylates SFPQ at 'Thr-687' upon T-cell activation. Phosphorylates NR1D1 st 'Ser-55' and 'Ser-59' and stabilizes it by protecting it from proteasomal degradation. Regulates the circadian clock via phosphorylation of the major clock components including BMAL1, CLOCK and PER2. Phosphorylates FBXL2 at 'Thr-404' and primes it for ubiquitination by the SCF(FBXO3) complex and proteasomal degradation. Phosphorylates CLOCK AT 'Ser-427' and targets it for proteasomal degradation. Phosphorylates BMAL1 at 'Ser-17' and 'Ser-21' and primes it for ubiquitination and proteasomal degradation. Phosphorylates OGT at 'Ser-3' or 'Ser-4' which positively regulates its activity. Phosphorylates MYCN in neuroblastoma cells which may promote its degradation. Regulates the circadian rhythmicity of hippocampal long-term potentiation and BMAL1 and PER2 expression. Acts as a regulator of autophagy by mediating phosphorylation of KAT5/TIP60 under starvation conditions, activating KAT5/TIP60 acetyltransferase activity and promoting acetylation of key autophagy regulators, such as ULK1 and RUBCNL/Pacer. Negatively regulates extrinsic apoptotic signaling pathway via death domain receptors. Promotes the formation of an anti-apoptotic complex, made of DDX3X, BRIC2 and GSK3B, at death receptors, including TNFRSF10B. The anti-apoptotic function is most effective with weak apoptotic signals and can be overcome by stronger stimulation. Phosphorylates E2F1, promoting the interaction between E2F1 and USP11, stabilizing E2F1 and promoting its activity. Phosphorylates mTORC2 complex component RICTOR at 'Ser-1235' in response to endoplasmic stress, inhibiting mTORC2. Phosphorylates mTORC2 complex component RICTOR at 'Thr-1695' which facilitates FBXW7-mediated ubiquitination and subsequent degradation of RICTOR. Phosphorylates FXR1, promoting FXR1 ubiquitination by the SCF(FBXO4) complex and FXR1 degradation by the proteasome. Phosphorylates interleukin-22 receptor subunit IL22RA1, preventing its proteasomal degradation. The sequence is that of Glycogen synthase kinase-3 beta from Homo sapiens (Human).